The chain runs to 218 residues: Cytidylate kinase (218 aa).

11-19 (GPGASGKGT) provides a ligand contact to ATP.

The protein belongs to the cytidylate kinase family. Type 1 subfamily.

Its subcellular location is the cytoplasm. The catalysed reaction is CMP + ATP = CDP + ADP. It catalyses the reaction dCMP + ATP = dCDP + ADP. The polypeptide is Cytidylate kinase (Neisseria meningitidis serogroup B (strain ATCC BAA-335 / MC58)).